We begin with the raw amino-acid sequence, 493 residues long: Reticulophagy regulator 1 (493 aa).

Positions 1 to 52 are disordered; sequence MASPAPPEPAEQGSPALAAAPQAPPPPTRAPPEEPEGAAPPEEGAAAGAGRQ. At 1–55 the chain is on the cytoplasmic side; sequence MASPAPPEPAEQGSPALAAAPQAPPPPTRAPPEEPEGAAPPEEGAAAGAGRQVEE. A compositionally biased stretch (low complexity) spans 37-52; that stretch reads GAAPPEEGAAAGAGRQ. Residues 56-76 form a helical membrane-spanning segment; that stretch reads AAGGVAAVVTWLLGEPALWLG. The Lumenal portion of the chain corresponds to 77 to 87; the sequence is GRADELLSWKR. Residues 80 to 229 are reticulon homology domain; the sequence is DELLSWKRPL…LLCAFLCPLF (150 aa). The chain crosses the membrane as a helical span at residues 88–108; that stretch reads PLHSLLAFVGANLVFWFLALT. Topologically, residues 109 to 114 are cytoplasmic; it reads PWRVYH. Residues 115–135 form a helical membrane-spanning segment; sequence LISVMILTRVIMQIIKDMILS. Over 136–204 the chain is Lumenal; sequence RTRGAQLWRS…LVCSVCTFFT (69 aa). Ser145 carries the post-translational modification Phosphoserine. Ser147 bears the Phosphoserine; by CAMK2B mark. Ser149 is subject to Phosphoserine. Residues 205–225 form a helical membrane-spanning segment; the sequence is ILGSYIPGVILSYLLLLCAFL. The Cytoplasmic portion of the chain corresponds to 226-493; it reads CPLFKCNDIG…GFLSNLLGGH (268 aa). The segment covering 315–326 has biased composition (polar residues); the sequence is FNLSEGYTPQTD. Disordered regions lie at residues 315 to 394 and 435 to 493; these read FNLS…GLSL and AAPS…LGGH. Residues 330 to 344 are compositionally biased toward basic and acidic residues; it reads DLDRPSEEVFSRDLS. At Thr353 the chain carries Phosphothreonine. The segment covering 368-388 has biased composition (basic and acidic residues); that stretch reads ELKRKKEQLDGGPRRSTEKKS. A compositionally biased stretch (acidic residues) spans 441-463; it reads EDTDTEEGDDFELLDQSELDQIE. The LIR motif motif lies at 449–454; the sequence is DDFELL. The span at 467-486 shows a compositional bias: polar residues; that stretch reads GLSQDQEAEAQQNKKSSGFL.

This sequence belongs to the RETREG family. As to quaternary structure, homooligomer; oligomerization is enhanced following endoplasmic reticulum stress and is mediated by the reticulon homology domain. Interacts with ATG8 family modifier proteins MAP1LC3A, MAP1LC3B, GABARAP, GABARAPL1 and GABARAPL2. In terms of processing, phosphorylation at Ser-147 by CAMK2B enhances oligomerization and membrane scission and reticulophagy activity.

It localises to the golgi apparatus. It is found in the cis-Golgi network membrane. The protein resides in the endoplasmic reticulum membrane. Functionally, endoplasmic reticulum (ER)-anchored autophagy regulator which mediates ER delivery into lysosomes through sequestration into autophagosomes. Promotes membrane remodeling and ER scission via its membrane bending capacity and targets the fragments into autophagosomes via interaction with ATG8 family proteins. Active under basal conditions. Required for collagen quality control in a LIR motif-dependent manner. Required for long-term survival of nociceptive and autonomic ganglion neurons. This is Reticulophagy regulator 1 (RETREG1) from Bos taurus (Bovine).